The chain runs to 217 residues: Glycosylphosphatidylinositol anchor biosynthesis protein 11 (217 aa).

2 helical membrane-spanning segments follow: residues 45–65 and 68–88; these read TWLT…KVFN and NTAE…IFQF. An N-linked (GlcNAc...) asparagine glycan is attached at N102. Transmembrane regions (helical) follow at residues 107-127, 134-154, 169-189, and 197-217; these read AISI…IILF, LLWE…PAVY, YFIL…LDWD, and IPIV…GAYL.

This sequence belongs to the PIGF family.

The protein resides in the endoplasmic reticulum membrane. The protein operates within glycolipid biosynthesis; glycosylphosphatidylinositol-anchor biosynthesis. In terms of biological role, acts in the GPI biosynthetic pathway between GlcNAc-PI synthesis and GPI transfer to protein. This is Glycosylphosphatidylinositol anchor biosynthesis protein 11 (GPI11) from Candida glabrata (strain ATCC 2001 / BCRC 20586 / JCM 3761 / NBRC 0622 / NRRL Y-65 / CBS 138) (Yeast).